The following is a 367-amino-acid chain: Apolipoprotein A-V (367 aa).

The N-terminal stretch at 1 to 20 is a signal peptide; sequence MVAVLTWALALLSAFATVQT. Residue Ser56 is modified to Phosphoserine. Residues 71–90 are disordered; the sequence is LGPLSGQGREPPGLPHDPEG.

Belongs to the apolipoprotein A1/A4/E family. Interacts with GPIHBP1. Interacts with SORL1; this interaction leads to APOA5 internalization and sorting either to lysosomes and degradation, or to the trans-Golgi network. Phosphorylated by FAM20C in the extracellular medium.

Its subcellular location is the secreted. The protein resides in the early endosome. The protein localises to the late endosome. It is found in the golgi apparatus. It localises to the trans-Golgi network. In terms of biological role, minor apolipoprotein mainly associated with HDL and to a lesser extent with VLDL. May also be associated with chylomicrons. Important determinant of plasma triglyceride (TG) levels by both being a potent stimulator of apo-CII lipoprotein lipase (LPL) TG hydrolysis and an inhibitor of the hepatic VLDL-TG production rate (without affecting the VLDL-apoB production rate). Activates poorly lecithin:cholesterol acyltransferase (LCAT) and does not enhance efflux of cholesterol from macrophages. Binds heparin. The protein is Apolipoprotein A-V (APOA5) of Neomonachus schauinslandi (Hawaiian monk seal).